The chain runs to 171 residues: Co-chaperone protein HscB homolog (171 aa).

Residues 2-74 (NYFELFGLPI…LRRAEYLLSL (73 aa)) form the J domain.

Belongs to the HscB family. As to quaternary structure, interacts with HscA and stimulates its ATPase activity.

Co-chaperone involved in the maturation of iron-sulfur cluster-containing proteins. Seems to help targeting proteins to be folded toward HscA. The protein is Co-chaperone protein HscB homolog of Vibrio cholerae serotype O1 (strain M66-2).